We begin with the raw amino-acid sequence, 327 residues long: Polyadenylate-binding protein-interacting protein 9 (327 aa).

The PAM2-like motif lies at 59–69 (KLNPLAKEFFP). Residues 97-113 (KQSGEEFDLDAKKDDNT) show a composition bias toward basic and acidic residues. The disordered stretch occupies residues 97–132 (KQSGEEFDLDAKKDDNTRKRRNYSQGRRRLTGRISK). The Bipartite nuclear localization signal signature appears at 114-125 (RKRRNYSQGRRR). The span at 114-127 (RKRRNYSQGRRRLT) shows a compositional bias: basic residues. RRM domains lie at 141–216 (RTVY…PSKT) and 238–314 (RTIY…PSKT). Residues 308 to 327 (RVSPSKTPVRPRITRPPSTN) form a disordered region.

It is found in the nucleus. The chain is Polyadenylate-binding protein-interacting protein 9 (CID9) from Arabidopsis thaliana (Mouse-ear cress).